The following is an 89-amino-acid chain: UPF0223 protein BcerKBAB4_3787 (89 aa).

It belongs to the UPF0223 family.

The chain is UPF0223 protein BcerKBAB4_3787 from Bacillus mycoides (strain KBAB4) (Bacillus weihenstephanensis).